Reading from the N-terminus, the 484-residue chain is Calcium-dependent protein kinase 31 (484 aa).

Residue G2 is the site of N-myristoyl glycine attachment. Residues 28-290 (YILGDELGQG…AAEVLGHPWM (263 aa)) enclose the Protein kinase domain. Residues 34–42 (LGQGQFGIT) and K57 each bind ATP. D156 functions as the Proton acceptor in the catalytic mechanism. The residue at position 196 (S196) is a Phosphoserine. Positions 295-325 (ASDKPIDGVVLSRLKQFRDMNKLKKVALKVI) are autoinhibitory domain. 4 consecutive EF-hand domains span residues 332-367 (EEIK…LGSN), 368-403 (LSKT…RYRL), 404-439 (DRDD…HGVG), and 444-474 (IKQI…GSSL). Positions 345, 347, 349, 351, 356, 381, 383, 385, 387, 392, 417, 419, 421, 423, 428, 452, 454, 456, 458, and 463 each coordinate Ca(2+).

This sequence belongs to the protein kinase superfamily. Ser/Thr protein kinase family. CDPK subfamily.

It localises to the membrane. The catalysed reaction is L-seryl-[protein] + ATP = O-phospho-L-seryl-[protein] + ADP + H(+). It catalyses the reaction L-threonyl-[protein] + ATP = O-phospho-L-threonyl-[protein] + ADP + H(+). Activated by calcium. Autophosphorylation may play an important role in the regulation of the kinase activity. In terms of biological role, may play a role in signal transduction pathways that involve calcium as a second messenger. The polypeptide is Calcium-dependent protein kinase 31 (CPK31) (Arabidopsis thaliana (Mouse-ear cress)).